The chain runs to 314 residues: MPRTDNDSWTITESVGATALGVAAARAAETESENPLIEDPFARVFVDAAGDGMWSMFANPALLAGAPEIESQVGARVRQMIDFMATRTAFFDEFFLGAADTGVRQVVILASGLDSRAWRLPWPDGTVVYELDQPRVLEFKSATLRQHGARPTAQLVNIPIDLRQDWPAALLDSGFDASKPTAWSAEGLVRYLPARAQDLLFERIDTLSPAGSWLATNVPQEGFSDPDLVRRQHEEMQRMRAAAGRLVEIQMPAVEDLWYAEERTPVADWLGEHGWRASATTSAELLTRYGRPVPDDAEGPVPPTLFVSAHRPAA.

Residues Asp132 and 161 to 162 each bind S-adenosyl-L-methionine; that span reads DL.

It belongs to the UPF0677 family.

Functionally, exhibits S-adenosyl-L-methionine-dependent methyltransferase activity. This Mycobacterium marinum (strain ATCC BAA-535 / M) protein is Putative S-adenosyl-L-methionine-dependent methyltransferase MMAR_5323.